A 305-amino-acid chain; its full sequence is Small ribosomal subunit protein uS3 (305 aa).

One can recognise a KH type-2 domain in the interval 17 to 86 (IDEFFSEELS…DPQVDVQEVD (70 aa)). Composition is skewed to acidic residues over residues 207-262 (EPEG…EAET) and 272-305 (AAEE…EEET). Residues 207–305 (EPEGDVEELL…EDETTDEEET (99 aa)) are disordered.

This sequence belongs to the universal ribosomal protein uS3 family. Part of the 30S ribosomal subunit.

Functionally, binds the lower part of the 30S subunit head. The sequence is that of Small ribosomal subunit protein uS3 from Natronomonas pharaonis (strain ATCC 35678 / DSM 2160 / CIP 103997 / JCM 8858 / NBRC 14720 / NCIMB 2260 / Gabara) (Halobacterium pharaonis).